We begin with the raw amino-acid sequence, 300 residues long: Phospholipase A1 (300 aa).

Cys4 and Cys87 are joined by a disulfide. The active-site Nucleophile is the Ser137. Asp165 (charge relay system) is an active-site residue. Cystine bridges form between Cys176–Cys181 and Cys218–Cys227. Residue His229 is the Charge relay system of the active site. Cystine bridges form between Cys244/Cys268, Cys245/Cys293, and Cys261/Cys266.

Belongs to the AB hydrolase superfamily. Lipase family. Expressed by the venom gland.

It is found in the secreted. It catalyses the reaction a 1,2-diacyl-sn-glycero-3-phosphocholine + H2O = a 2-acyl-sn-glycero-3-phosphocholine + a fatty acid + H(+). Its activity is regulated as follows. Local inflammatory effects are inhibited by antiserotonin drugs (cyproheptadine and methysergide), indomethacin, betamethasone, and antihistamine (chlorpheniramine). In terms of biological role, catalyzes the hydrolysis of phosphatidylcholine with phospholipase A1 activity. Shows potent hemolytic activity that is responsible for its lethal effect. May act as an allergen. In vivo, induces local inflammatory effects. This chain is Phospholipase A1, found in Vespa basalis (Hornet).